Consider the following 76-residue polypeptide: Dermaseptin-S7 (76 aa).

Positions 1-22 (MDILKKSLFLVLFLGLISLSFC) are cleaved as a signal peptide. Residues 23–45 (EEEKRENEDEEEQEDDEQSEEKR) constitute a propeptide that is removed on maturation. Residues 25-45 (EKRENEDEEEQEDDEQSEEKR) are disordered. Over residues 30–41 (EDEEEQEDDEQS) the composition is skewed to acidic residues. A Glutamine amide modification is found at Q73. Residues 75–76 (EQ) constitute a propeptide that is removed on maturation.

It belongs to the frog skin active peptide (FSAP) family. Dermaseptin subfamily. Expressed by the skin glands.

It is found in the secreted. Antimicrobial peptide. The polypeptide is Dermaseptin-S7 (Phyllomedusa sauvagei (Sauvage's leaf frog)).